A 747-amino-acid polypeptide reads, in one-letter code: DNA-directed RNA polymerase subunit beta' (747 aa).

Residues cysteine 70, cysteine 72, cysteine 97, and cysteine 100 each coordinate Zn(2+). Positions 502, 504, and 506 each coordinate Mg(2+).

It belongs to the RNA polymerase beta' chain family. RpoC1 subfamily. In terms of assembly, in plastids the minimal PEP RNA polymerase catalytic core is composed of four subunits: alpha, beta, beta', and beta''. When a (nuclear-encoded) sigma factor is associated with the core the holoenzyme is formed, which can initiate transcription. Mg(2+) serves as cofactor. The cofactor is Zn(2+).

The protein localises to the plastid. The protein resides in the chloroplast. It catalyses the reaction RNA(n) + a ribonucleoside 5'-triphosphate = RNA(n+1) + diphosphate. In terms of biological role, DNA-dependent RNA polymerase catalyzes the transcription of DNA into RNA using the four ribonucleoside triphosphates as substrates. This Gnetum parvifolium (Small-leaved jointfir) protein is DNA-directed RNA polymerase subunit beta'.